The following is a 379-amino-acid chain: Botryococcene C-methyltransferase (379 aa).

A helical membrane pass occupies residues 17–37 (LLTWKGAAGLAAAVALGYIII).

It belongs to the class I-like SAM-binding methyltransferase superfamily. Erg6/SMT family.

The protein resides in the microsome membrane. The catalysed reaction is C30 botryococcene + 2 S-adenosyl-L-methionine = 3,20-dimethyl-1,2,21,22-tetradehydro-2,3,20,21-tetrahydrobotryococcene + 2 S-adenosyl-L-homocysteine + 2 H(+). Its function is as follows. Converts botryococcene to mono- and dimethyl derivatives, but not to tri- and tetramethylated products. Unable to methylate cycloartenol, zymosterol or lanosterol, but can also use squalene as substrate. Methylates both C-3 and C22 positions, but only C-3 position in monomethylated squalenes. In contrast, monomethylated botryococcene occured mainly at the C-20 position yielding showacene, but also at the C-3 position yielding isoshowacene. This Botryococcus braunii (Green alga) protein is Botryococcene C-methyltransferase (TMT-3).